We begin with the raw amino-acid sequence, 773 residues long: MAASQGGGGNSGGGGCSGGGSGGGGGAAGGGGGGGGGGGGGAGAGGGGGCGGTVAVPIPVPTLFGQPFPNGPQWHPGSLQPQHTVRSLDRALEEAGNSGILSLSGRKLREFPGSGYDLTDTTQADLSRNRFTEIPSDVWLFAPLETLNLYHNCIKTIPEAIKNLQMLTYLNISRNLLSTLPKYLFDLPLKVLVVSNNKLVSIPEEIGKLKDLMELDVSCNEIQVLPQQMGKLHSLKELNIRRNNLHVLPDELGDLPLVKLDFSCNKVTEIPVCYRKLHHLQVIILDNNPLQVPPAQICLKGKVHIFKYLNIQACCRMDKKPDSLDLPSLNKRMPSQPLTDSMEDFYPNKNHGPDSGIGSDNGEKRLSTTEPSDDDTISLHSQVSESNREQTSRNDSHITGSKPDSQKDQEVYDFIDPNTEDVAVPEEGDTHIGSFVSFLKGKEKSSEKSQKNEEPPNEKKVDKEQLLPEEEDDDLKEVTDLRKIAAQLLKQEQKNRILNHSTSVMRNKLKQTVECEKSVPADEGNSPLSPLAWQPLENQKDQIVDQQWPESQPIIWQNEERRRSKQIRKEYFKYKSTRKNSSGNENEEQESDNAHMSAQSPVSSEEYDRSDGFSHGPFGLKPRSAFSRASRQEYGAADPGFTMRRKMEHLREEREQIRQLRNNLESRLKVILPDDIGAALMDGVVLCHLANHIRPRSVASIHVPSPAVPKLSMAKCRRNVENFLDACKKLGVSQERLCLPHHILEERGLVKVGVTVQALLELPTTKASQLSMA.

The segment at 1–46 (MAASQGGGGNSGGGGCSGGGSGGGGGAAGGGGGGGGGGGGGAGAGG) is disordered. 9 LRR repeats span residues 97 to 118 (NSGILSLSGRKLREFPGSGYDL), 120 to 141 (DTTQADLSRNRFTEIPSDVWLF), 143 to 164 (PLETLNLYHNCIKTIPEAIKNL), 166 to 187 (MLTYLNISRNLLSTLPKYLFDL), 188 to 209 (PLKVLVVSNNKLVSIPEEIGKL), 211 to 232 (DLMELDVSCNEIQVLPQQMGKL), 234 to 256 (SLKELNIRRNNLHVLPDELGDLP), 257 to 277 (LVKLDFSCNKVTEIPVCYRKL), and 279 to 300 (HLQVIILDNNPLQVPPAQICLK). 3 disordered regions span residues 324–409 (LDLP…QKDQ), 438–478 (FLKG…LKEV), and 573–633 (KYKS…SRQE). 2 stretches are compositionally biased toward basic and acidic residues: residues 386–396 (SNREQTSRNDS) and 440–466 (KGKEKSSEKSQKNEEPPNEKKVDKEQL). Residues 594-603 (AHMSAQSPVS) show a composition bias toward polar residues. The 114-residue stretch at 650–763 (LREEREQIRQ…VTVQALLELP (114 aa)) folds into the Calponin-homology (CH) domain.

May play a role in the organization of the cytoskeleton. This Mus musculus (Mouse) protein is Leucine-rich repeat and calponin homology domain-containing protein 2 (Lrch2).